A 351-amino-acid chain; its full sequence is Purine permease 3 (351 aa).

A run of 10 helical transmembrane segments spans residues 4 to 24, 35 to 55, 72 to 92, 108 to 128, 132 to 152, 168 to 188, 207 to 227, 249 to 269, 274 to 294, and 304 to 324; these read ALVI…PLIM, IWFS…PLLF, FFLI…LSGF, TAAL…FFMV, FTPF…VLGM, ITGF…LPLV, FQLI…FIAG, VAVF…GLIF, LVSG…AVIF, and GLSL…EIKS. Residues 45-152 form the EamA domain; the sequence is GFPVIFIPLL…LTVGAAVLGM (108 aa). Residues 329–351 are disordered; it reads RRIQQEESQETEQSSLSRPISEC.

The protein belongs to the purine permeases (TC 2.A.7.14) family. In terms of tissue distribution, restricted to pollen.

It localises to the membrane. May be involved in transport of purine derivatives during pollen germination and tube elongation. This Arabidopsis thaliana (Mouse-ear cress) protein is Purine permease 3 (PUP3).